Here is a 492-residue protein sequence, read N- to C-terminus: Catalase isozyme 1 (492 aa).

Active-site residues include H65 and N138. A heme-binding site is contributed by Y348.

The protein belongs to the catalase family. In terms of assembly, homotetramer. Requires heme as cofactor. In whole endosperms (aleurones plus starchy endosperm), in isolated aleurones and in developing seeds.

The protein localises to the peroxisome. The protein resides in the glyoxysome. It catalyses the reaction 2 H2O2 = O2 + 2 H2O. Its function is as follows. Occurs in almost all aerobically respiring organisms and serves to protect cells from the toxic effects of hydrogen peroxide. The sequence is that of Catalase isozyme 1 (CAT1) from Hordeum vulgare (Barley).